The chain runs to 86 residues: Neurotoxin 3FTx-RK (86 aa).

The N-terminal stretch at 1 to 21 (MKTLLLTLVVVTIVCLELGYT) is a signal peptide. Disulfide bonds link cysteine 24-cysteine 45, cysteine 38-cysteine 63, cysteine 67-cysteine 78, and cysteine 79-cysteine 84.

Expressed by the venom gland.

It is found in the secreted. This Bungarus fasciatus (Banded krait) protein is Neurotoxin 3FTx-RK.